A 718-amino-acid chain; its full sequence is Catalase-peroxidase (718 aa).

The tryptophyl-tyrosyl-methioninium (Trp-Tyr) (with M-245) cross-link spans 98-219 (WHAAGTYRMG…LAATEMGLIY (122 aa)). Histidine 99 (proton acceptor) is an active-site residue. A cross-link (tryptophyl-tyrosyl-methioninium (Tyr-Met) (with W-98)) is located at residues 219–245 (YVNPEGPQASGDPRSAAPFIRATFGNM). Histidine 260 is a heme b binding site.

The protein belongs to the peroxidase family. Peroxidase/catalase subfamily. In terms of assembly, homodimer or homotetramer. The cofactor is heme b. In terms of processing, formation of the three residue Trp-Tyr-Met cross-link is important for the catalase, but not the peroxidase activity of the enzyme.

The catalysed reaction is H2O2 + AH2 = A + 2 H2O. It catalyses the reaction 2 H2O2 = O2 + 2 H2O. Bifunctional enzyme with both catalase and broad-spectrum peroxidase activity. This chain is Catalase-peroxidase, found in Acinetobacter baumannii (strain ACICU).